The sequence spans 278 residues: MSPLIVGTLIIILLSGLATAFYVTWQGRLICAGVGLILEQAYEGGQMFNTLMAHCFETYNGVEKSGTQCVADWLKVGLLAVTFGAGGPRLVNTLGGTFLTSPTAKRSNLYCDDFTGADYFSCELETLRPYTLMRKSLPYGNIHDVWINTTDTHQMIGVHMTLNGTDMIHYYNKTYVINYSGLKLNSSAINKRSYFYPQDSFLVSHAEWQDGNGIWTDTDYFAAMADCDFLGQNLGFWLASSYPNAYKWETQLWRTVGINLNGNIIYPGQLIMQTFNGS.

Residues Met1–Ala20 form the signal peptide. Gly96 carries the GPI-anchor amidated glycine lipid modification. The propeptide at Thr97 to Ser278 is removed in mature form.

The protein resides in the cell membrane. This is an uncharacterized protein from Schizosaccharomyces pombe (strain 972 / ATCC 24843) (Fission yeast).